The following is a 131-amino-acid chain: POU domain, class 3, transcription factor 3 (131 aa).

The POU-specific domain maps to 1–60; sequence FTQRRMKLGFTQADVGLALGTLYGNVFSQTTICRFEALQLSFKNMCKLKPLLNKWLEEAD. Residues 78–131 constitute a DNA-binding region (homeobox); sequence KRKKRTSIEVSVKGALESHFLKCPKPSAQEITNLADSLQLEKEVVRVWFCNNLQ.

This sequence belongs to the POU transcription factor family. Class-3 subfamily. In terms of assembly, homodimer. Brain.

The protein resides in the nucleus. In terms of biological role, transcription factor that acts synergistically with SOX11 and SOX4. Plays a role in neuronal development. Is implicated in an enhancer activity at the embryonic met-mesencephalic junction; the enhancer element contains the octamer motif (5'-ATTTGCAT-3'). In Sus scrofa (Pig), this protein is POU domain, class 3, transcription factor 3 (POU3F3).